A 232-amino-acid polypeptide reads, in one-letter code: Large ribosomal subunit protein uL1 (232 aa).

It belongs to the universal ribosomal protein uL1 family. In terms of assembly, part of the 50S ribosomal subunit.

In terms of biological role, binds directly to 23S rRNA. The L1 stalk is quite mobile in the ribosome, and is involved in E site tRNA release. Protein L1 is also a translational repressor protein, it controls the translation of the L11 operon by binding to its mRNA. In Xanthomonas campestris pv. campestris (strain B100), this protein is Large ribosomal subunit protein uL1.